Consider the following 268-residue polypeptide: Tryptophan synthase alpha chain (268 aa).

Catalysis depends on proton acceptor residues Glu49 and Asp60.

The protein belongs to the TrpA family. As to quaternary structure, tetramer of two alpha and two beta chains.

The catalysed reaction is (1S,2R)-1-C-(indol-3-yl)glycerol 3-phosphate + L-serine = D-glyceraldehyde 3-phosphate + L-tryptophan + H2O. It participates in amino-acid biosynthesis; L-tryptophan biosynthesis; L-tryptophan from chorismate: step 5/5. In terms of biological role, the alpha subunit is responsible for the aldol cleavage of indoleglycerol phosphate to indole and glyceraldehyde 3-phosphate. The sequence is that of Tryptophan synthase alpha chain from Salmonella agona (strain SL483).